The sequence spans 562 residues: Glutamate--tRNA ligase (562 aa).

Residues 104–114 (PNPDFYMTLGN) carry the 'HIGH' region motif.

The protein belongs to the class-I aminoacyl-tRNA synthetase family. Glutamate--tRNA ligase type 2 subfamily.

Its subcellular location is the cytoplasm. It carries out the reaction tRNA(Glu) + L-glutamate + ATP = L-glutamyl-tRNA(Glu) + AMP + diphosphate. Its function is as follows. Catalyzes the attachment of glutamate to tRNA(Glu) in a two-step reaction: glutamate is first activated by ATP to form Glu-AMP and then transferred to the acceptor end of tRNA(Glu). In Ignicoccus hospitalis (strain KIN4/I / DSM 18386 / JCM 14125), this protein is Glutamate--tRNA ligase.